A 322-amino-acid chain; its full sequence is UPF0324 membrane protein BB4178 (322 aa).

Transmembrane regions (helical) follow at residues 13–35, 50–69, 76–98, 108–127, 139–161, 171–193, 209–231, 241–260, 273–292, and 296–318; these read FIRQ…YGNF, FTAR…NISI, GLPG…TVAG, TAML…VLAF, AVAV…VIYH, ALGI…ASNI, VALL…AAGA, VPWF…LDIL, VFVL…FAQI, and GPRV…YGIV.

Belongs to the UPF0324 family.

It localises to the cell membrane. The sequence is that of UPF0324 membrane protein BB4178 from Bordetella bronchiseptica (strain ATCC BAA-588 / NCTC 13252 / RB50) (Alcaligenes bronchisepticus).